The following is a 414-amino-acid chain: Collagenase (414 aa).

Belongs to the peptidase U32 family. As to quaternary structure, homodimer. Requires a metal cation as cofactor.

Has collagenase activity. Hydrolyzes type I collagen. May play a role in virulence. In Porphyromonas gingivalis (strain ATCC BAA-308 / W83), this protein is Collagenase (prtC).